Reading from the N-terminus, the 906-residue chain is Protein translocase subunit SecA (906 aa).

ATP-binding positions include Gln86, 104–108 (GEGKT), and Asp511. Basic and acidic residues-rich tracts occupy residues 853-865 (HESVIDNNQRHDE) and 877-888 (VRREGPKVKRND). Residues 853-906 (HESVIDNNQRHDEDEQEEAPKVQQVRREGPKVKRNDPCPCGSGKKYKQCHSKVE) are disordered. Residues Cys890, Cys892, Cys901, and His902 each contribute to the Zn(2+) site. Over residues 896-906 (KKYKQCHSKVE) the composition is skewed to basic residues.

It belongs to the SecA family. Monomer and homodimer. Part of the essential Sec protein translocation apparatus which comprises SecA, SecYEG and auxiliary proteins SecDF-YajC and YidC. Zn(2+) is required as a cofactor.

It localises to the cell inner membrane. The protein localises to the cytoplasm. The enzyme catalyses ATP + H2O + cellular proteinSide 1 = ADP + phosphate + cellular proteinSide 2.. Part of the Sec protein translocase complex. Interacts with the SecYEG preprotein conducting channel. Has a central role in coupling the hydrolysis of ATP to the transfer of proteins into and across the cell membrane, serving both as a receptor for the preprotein-SecB complex and as an ATP-driven molecular motor driving the stepwise translocation of polypeptide chains across the membrane. The protein is Protein translocase subunit SecA of Francisella tularensis subsp. mediasiatica (strain FSC147).